We begin with the raw amino-acid sequence, 195 residues long: Holliday junction branch migration complex subunit RuvA (195 aa).

The domain I stretch occupies residues 1 to 66; it reads MNYLIFKVIY…LIIKDLYGFR (66 aa). Residues 67–141 form a domain II region; the sequence is TYNERLLFID…KYINKVNDKN (75 aa). A region of interest (flexible linker) is located at residue N141. Positions 141–195 are domain III; the sequence is NNWAKELSIGLENLGYTKKDIEYAITKVKINSQQDIDISEIISSAIKEISLRHEN.

This sequence belongs to the RuvA family. Homotetramer. Forms an RuvA(8)-RuvB(12)-Holliday junction (HJ) complex. HJ DNA is sandwiched between 2 RuvA tetramers; dsDNA enters through RuvA and exits via RuvB. An RuvB hexamer assembles on each DNA strand where it exits the tetramer. Each RuvB hexamer is contacted by two RuvA subunits (via domain III) on 2 adjacent RuvB subunits; this complex drives branch migration. In the full resolvosome a probable DNA-RuvA(4)-RuvB(12)-RuvC(2) complex forms which resolves the HJ.

It is found in the cytoplasm. Its function is as follows. The RuvA-RuvB-RuvC complex processes Holliday junction (HJ) DNA during genetic recombination and DNA repair, while the RuvA-RuvB complex plays an important role in the rescue of blocked DNA replication forks via replication fork reversal (RFR). RuvA specifically binds to HJ cruciform DNA, conferring on it an open structure. The RuvB hexamer acts as an ATP-dependent pump, pulling dsDNA into and through the RuvAB complex. HJ branch migration allows RuvC to scan DNA until it finds its consensus sequence, where it cleaves and resolves the cruciform DNA. This chain is Holliday junction branch migration complex subunit RuvA, found in Ureaplasma parvum serovar 3 (strain ATCC 27815 / 27 / NCTC 11736).